Reading from the N-terminus, the 1526-residue chain is Probable autotransporter YpjA (1526 aa).

Residues 1 to 29 form the signal peptide; the sequence is MNRTSPYYCRRSVLSLLISALIYAPPGMA. The interval 1173 to 1223 is disordered; it reads NSNWNLTNDVKPNPDPIPNPKPDPKPDPKPDPNPKPDPTPDPTPTPVPEKR. Residues 1194-1206 are compositionally biased toward basic and acidic residues; that stretch reads PDPKPDPKPDPNP. Pro residues predominate over residues 1207–1219; sequence KPDPTPDPTPTPV. The Autotransporter domain maps to 1258–1526; it reads ASPHNNNVWG…NAVAGVNWSF (269 aa).

The protein localises to the cell outer membrane. In terms of biological role, upon overexpression shows increased adherence to polyvinyl chloride (PVC) plates, increased mature biofilm formation. The polypeptide is Probable autotransporter YpjA (ypjA) (Escherichia coli (strain K12)).